We begin with the raw amino-acid sequence, 883 residues long: HTH-type transcriptional regulator AlkS (883 aa).

The 66-residue stretch at 816–881 (ENKAGDFLTL…QAIIEAERQG (66 aa)) folds into the HTH luxR-type domain. The H-T-H motif DNA-binding region spans 840 to 859 (NKQIATKMYVTEDAIKWHMR).

It functions in the pathway hydrocarbon metabolism; alkane degradation. In terms of biological role, may act as a transcriptional regulator of AlkB. The protein is HTH-type transcriptional regulator AlkS (alkS) of Pseudomonas putida (Arthrobacter siderocapsulatus).